A 553-amino-acid polypeptide reads, in one-letter code: Transcription factor MYB65 (553 aa).

The tract at residues 1 to 44 (MSYTTATADSDDGMHSSIHNESPAPDSISNGCRSRGKRSVLKKG) is disordered. 2 HTH myb-type domains span residues 38–90 (RSVL…ANHL) and 91–145 (RPNL…KRRQ). DNA-binding regions (H-T-H motif) lie at residues 66-90 (WNAVQKHTSLARCGKSCRLRWANHL) and 118-141 (WAQMAEHLPGRTDNEIKNYWNTRI).

Mostly expressed in roots (e.g. root tips), stems, pollen, shoot apices, flowers and floral shoot tips, and, to a lower extent, in leaves and siliques.

It localises to the nucleus. Its function is as follows. Transcriptional activator of alpha-amylase expression that binds to 5'-CAACTGTC-3' motif in target gene promoter. In vegetative tissues, inhibits growth by reducing cell proliferation. Promotes the expression of aleurone-related genes (e.g. CP1, CP, GASA1, BXL1 and BXL2) in seeds. Together with MYB33 and MYB101, promotes the programmed cell death (PCD) the vacuolation of protein storage vacuoles (PSVs) in the aleurone layers during seed germination. Together with MYB33, facilitates anther and tapetum development. This is Transcription factor MYB65 from Arabidopsis thaliana (Mouse-ear cress).